Consider the following 570-residue polypeptide: Proline--tRNA ligase (570 aa).

Belongs to the class-II aminoacyl-tRNA synthetase family. ProS type 1 subfamily. Homodimer.

It localises to the cytoplasm. It catalyses the reaction tRNA(Pro) + L-proline + ATP = L-prolyl-tRNA(Pro) + AMP + diphosphate. Functionally, catalyzes the attachment of proline to tRNA(Pro) in a two-step reaction: proline is first activated by ATP to form Pro-AMP and then transferred to the acceptor end of tRNA(Pro). As ProRS can inadvertently accommodate and process non-cognate amino acids such as alanine and cysteine, to avoid such errors it has two additional distinct editing activities against alanine. One activity is designated as 'pretransfer' editing and involves the tRNA(Pro)-independent hydrolysis of activated Ala-AMP. The other activity is designated 'posttransfer' editing and involves deacylation of mischarged Ala-tRNA(Pro). The misacylated Cys-tRNA(Pro) is not edited by ProRS. This chain is Proline--tRNA ligase, found in Acidithiobacillus ferrooxidans (strain ATCC 23270 / DSM 14882 / CIP 104768 / NCIMB 8455) (Ferrobacillus ferrooxidans (strain ATCC 23270)).